The chain runs to 651 residues: Beta-glucuronidase (651 aa).

The signal sequence occupies residues 1–22 (MARGSAVAWAAFGPLLWGCALG). N-linked (GlcNAc...) asparagine glycosylation is found at Asn173, Asn190, Asn272, and Asn420. The active-site Proton donor is the Glu451. Asn631 carries an N-linked (GlcNAc...) asparagine glycan.

It belongs to the glycosyl hydrolase 2 family. In terms of assembly, homotetramer.

The protein localises to the lysosome. It catalyses the reaction a beta-D-glucuronoside + H2O = D-glucuronate + an alcohol. Its activity is regulated as follows. Inhibited by L-aspartic acid. Functionally, plays an important role in the degradation of dermatan and keratan sulfates. The polypeptide is Beta-glucuronidase (GUSB) (Pongo abelii (Sumatran orangutan)).